A 378-amino-acid polypeptide reads, in one-letter code: Beta sliding clamp (378 aa).

It belongs to the beta sliding clamp family. As to quaternary structure, forms a ring-shaped head-to-tail homodimer around DNA which binds and tethers DNA polymerases and other proteins to the DNA. The DNA replisome complex has a single clamp-loading complex (3 tau and 1 each of delta, delta', psi and chi subunits) which binds 3 Pol III cores (1 core on the leading strand and 2 on the lagging strand) each with a beta sliding clamp dimer. Additional proteins in the replisome are other copies of gamma, psi and chi, Ssb, DNA helicase and RNA primase.

It is found in the cytoplasm. Confers DNA tethering and processivity to DNA polymerases and other proteins. Acts as a clamp, forming a ring around DNA (a reaction catalyzed by the clamp-loading complex) which diffuses in an ATP-independent manner freely and bidirectionally along dsDNA. Initially characterized for its ability to contact the catalytic subunit of DNA polymerase III (Pol III), a complex, multichain enzyme responsible for most of the replicative synthesis in bacteria; Pol III exhibits 3'-5' exonuclease proofreading activity. The beta chain is required for initiation of replication as well as for processivity of DNA replication. The sequence is that of Beta sliding clamp (dnaN) from Streptococcus pneumoniae (strain ATCC BAA-255 / R6).